We begin with the raw amino-acid sequence, 473 residues long: P3 protein (473 aa).

9 helical membrane-spanning segments follow: residues 25–45, 221–241, 249–269, 277–297, 316–336, 356–376, 381–401, 413–433, and 446–466; these read FVGMLGTALLFISLPWGAQVM, PMLLGLLGQFLVMPFYAFLMA, ALALGLIITCSSPGGGGSYLF, VTLAISMTFISTVAATGFLPL, ISKILGTLLFIAIPIAAGVVI, FILLLGGLFLAYHMGVFILVG, IVLVGFTVPLVGLLVGYSLAI, VSIEVGVQNSLLALAMLQLSL, and FIVALSGTSEMLALVIGQFIY.

This sequence belongs to the bile acid:sodium symporter (BASS) (TC 2.A.28) family.

The protein localises to the membrane. In terms of biological role, the ubiquitous expression and the conservation of the sequence in distant animal species suggest that the gene codes for a protein with housekeeping functions. This chain is P3 protein (Slc10a3), found in Mus musculus (Mouse).